Here is a 103-residue protein sequence, read N- to C-terminus: Co-chaperonin GroES (103 aa).

It belongs to the GroES chaperonin family. In terms of assembly, heptamer of 7 subunits arranged in a ring. Interacts with the chaperonin GroEL.

The protein resides in the cytoplasm. Together with the chaperonin GroEL, plays an essential role in assisting protein folding. The GroEL-GroES system forms a nano-cage that allows encapsulation of the non-native substrate proteins and provides a physical environment optimized to promote and accelerate protein folding. GroES binds to the apical surface of the GroEL ring, thereby capping the opening of the GroEL channel. In Synechocystis sp. (strain ATCC 27184 / PCC 6803 / Kazusa), this protein is Co-chaperonin GroES.